Consider the following 436-residue polypeptide: Glutamate-1-semialdehyde 2,1-aminomutase (436 aa).

The residue at position 270 (Lys270) is an N6-(pyridoxal phosphate)lysine.

Belongs to the class-III pyridoxal-phosphate-dependent aminotransferase family. HemL subfamily. Homodimer. Pyridoxal 5'-phosphate is required as a cofactor.

It localises to the cytoplasm. It catalyses the reaction (S)-4-amino-5-oxopentanoate = 5-aminolevulinate. Its pathway is porphyrin-containing compound metabolism; protoporphyrin-IX biosynthesis; 5-aminolevulinate from L-glutamyl-tRNA(Glu): step 2/2. The polypeptide is Glutamate-1-semialdehyde 2,1-aminomutase (Cutibacterium acnes (strain DSM 16379 / KPA171202) (Propionibacterium acnes)).